A 715-amino-acid chain; its full sequence is Lactococcin transport/processing ATP-binding protein LcnC-like (715 aa).

Residues 11 to 138 enclose the Peptidase C39 domain; the sequence is QVDEMDCGCA…SEWTGISLFL (128 aa). The active site involves Cys-17. Helical transmembrane passes span 167–187, 197–217, 237–257, 282–302, and 307–327; these read VILN…LGSY, IPNA…LTYI, LAID…MSFF, TILS…ILGL, and LFLL…IFTP. The 283-residue stretch at 168–450 folds into the ABC transmembrane type-1 domain; it reads ILNIVIASFI…IINLQTKLQK (283 aa). One can recognise an ABC transporter domain in the interval 482 to 715; sequence LNMSEISYQY…NGFYAQLYHN (234 aa). An ATP-binding site is contributed by 515-522; it reads GISGSGKS.

It belongs to the ABC transporter superfamily. HlyB family.

Its subcellular location is the cell membrane. In terms of biological role, involved in the export process of a bacteriocin lactococcin. The polypeptide is Lactococcin transport/processing ATP-binding protein LcnC-like (lcnC) (Lactococcus lactis subsp. lactis (strain IL1403) (Streptococcus lactis)).